Reading from the N-terminus, the 620-residue chain is MDSHTLLQALIYLGSAALIVPIAVRLGLGSVLGYLIAGCIIGPWGLRLVTDAESILHFAEIGVVLMLFVIGLELDPQRLWKLRASVFGGGALQMVVCGGLIGLFCMFLGLRWQVAELIGMTLALSSTAIAMQAMNERNLTVSQVGRSAFAVLLFQDIAAIPLVAMIPLLAASGASTTLGAFALSALKVAGALALVVLLGRYVTRPALRFVARSGLREVFSAVALFLVFGFGLLLEEVGLSMAMGAFLAGVLLASSEYRHALESDIEPFKGLLLGLFFIGVGMSIDFGTLVENPLRILLLLAGFLAIKIVMLWLVARPLGVPAKQRRWFAVLLGQGSEFAFVVFGAAQMADVLEPEWAKALTLAVALSMAATPIFLVLLTRMEKTATGEAREADEIDEEQPRVIVAGFGRFGQIAGRLLLSSGVKMVVLDHDPDHIETLRKFGMKVFYGDATRMDLLESAGAAKAEVLINAIDDPQTNLQLSELVKTHFPHLQIIARARDVDHYIRLRQAGVAMPERETFEGALKSGRQALEALGLGRYEARERADLFRHFNTRMVEEMAKGENDPLSRAAAYKRTSAMLSEIITEDREHLSLIQRHGWQGTAEGKHSGEVADEPEVKPSI.

12 helical membrane passes run 4–24, 26–46, 54–74, 90–110, 114–134, 149–169, 178–198, 218–238, 270–290, 294–314, 327–347, and 359–379; these read HTLLQALIYLGSAALIVPIAV, LGLGSVLGYLIAGCIIGPWGL, SILHFAEIGVVLMLFVIGLEL, GALQMVVCGGLIGLFCMFLGL, VAELIGMTLALSSTAIAMQAM, FAVLLFQDIAAIPLVAMIPLL, LGAFALSALKVAGALALVVLL, VFSAVALFLVFGFGLLLEEVG, GLLLGLFFIGVGMSIDFGTLV, LRILLLLAGFLAIKIVMLWLV, WFAVLLGQGSEFAFVVFGAAQ, and ALTLAVALSMAATPIFLVLLT. One can recognise an RCK N-terminal domain in the interval 399-518; sequence QPRVIVAGFG…AGVAMPERET (120 aa). Residues 599–620 are disordered; the sequence is QGTAEGKHSGEVADEPEVKPSI.

It belongs to the monovalent cation:proton antiporter 2 (CPA2) transporter (TC 2.A.37) family. KefC subfamily. As to quaternary structure, homodimer. Interacts with the regulatory subunit KefF.

It is found in the cell inner membrane. Its function is as follows. Pore-forming subunit of a potassium efflux system that confers protection against electrophiles. Catalyzes K(+)/H(+) antiport. This Salmonella agona (strain SL483) protein is Glutathione-regulated potassium-efflux system protein KefC.